Here is a 457-residue protein sequence, read N- to C-terminus: MYSFNTLRLYLWETIVFFSLAASKEAEAARSAPKPMSPSDFLDKLMGRTSGYDARIRPNFKGPPVNVSCNIFINSFGSIAETTMDYRVNIFLRQQWNDPRLAYNEYPDDSLDLDPSMLDSIWKPDLFFANEKGAHFHEITTDNKLLRISRNGNVLYSIRITLTLACPMDLKNFPMDVQTCIMQLESFGYTMNDLIFEWQEQGAVQVADGLTLPQFILKEEKDLRYCTKHYNTGKFTCIEARFHLERQMGYYLIQMYIPSLLIVILSWISFWINMDAAPARVGLGITTVLTMTTQSSGSRASLPKVSYVKAIDIWMAVCLLFVFSALLEYAAVNFVSRQHKELLRFRRKRRHHKSPMLNLFQEDEAGEGRFNFSAYGMGPACLQAKDGISVKGANNSNTTNPPPAPSKSPEEMRKLFIQRAKKIDKISRIGFPMAFLIFNMFYWIIYKIVRREDVHNQ.

A signal peptide spans 1 to 28; sequence MYSFNTLRLYLWETIVFFSLAASKEAEA. Residues 29–250 are Extracellular-facing; the sequence is ARSAPKPMSP…RFHLERQMGY (222 aa). Asn-66 carries N-linked (GlcNAc...) asparagine glycosylation. Glycine is bound by residues Arg-93 and Ser-157. An intrachain disulfide couples Cys-166 to Cys-180. Residues Glu-220 and Asp-222 each contribute to the Zn(2+) site. Cys-226 and Cys-237 are joined by a disulfide. Position 230-235 (230-235) interacts with strychnine; sequence YNTGKF. Residue Thr-232 participates in glycine binding. His-243 provides a ligand contact to Zn(2+). A helical membrane pass occupies residues 251 to 272; sequence YLIQMYIPSLLIVILSWISFWI. Residues 273-277 are Cytoplasmic-facing; that stretch reads NMDAA. Residues 278–298 traverse the membrane as a helical segment; the sequence is PARVGLGITTVLTMTTQSSGS. Residues 299 to 309 are Extracellular-facing; that stretch reads RASLPKVSYVK. The chain crosses the membrane as a helical span at residues 310–330; sequence AIDIWMAVCLLFVFSALLEYA. Over 331–425 the chain is Cytoplasmic; sequence AVNFVSRQHK…FIQRAKKIDK (95 aa). The tract at residues 391 to 410 is disordered; that stretch reads KGANNSNTTNPPPAPSKSPE. The chain crosses the membrane as a helical span at residues 426–446; it reads ISRIGFPMAFLIFNMFYWIIY. The Extracellular portion of the chain corresponds to 447 to 457; it reads KIVRREDVHNQ.

This sequence belongs to the ligand-gated ion channel (TC 1.A.9) family. Glycine receptor (TC 1.A.9.3) subfamily. GLRA1 sub-subfamily. In terms of assembly, interacts with GLRB to form heteropentameric channels; this is probably the predominant form in vivo. Heteropentamer composed of four GLRA1 subunits and one GLRB subunit. Heteropentamer composed of two GLRA1 and three GLRB. Heteropentamer composed of three GLRA1 and two GLRB. Homopentamer (in vitro). Both homopentamers and heteropentamers form functional ion channels, but their characteristics are subtly different.

The protein localises to the postsynaptic cell membrane. It localises to the synapse. The protein resides in the perikaryon. It is found in the cell projection. Its subcellular location is the dendrite. The protein localises to the cell membrane. It carries out the reaction chloride(in) = chloride(out). With respect to regulation, channel opening is triggered by extracellular glycine. Channel characteristics depend on the subunit composition; heteropentameric channels are activated by lower glycine levels and display faster desensitization. Channel opening is also triggered by taurine and beta-alanine. Channel activity is potentiated by nanomolar concentrations of Zn(2+); half-maximal activation is observed with 37 nM Zn(2+). Inhibited by higher Zn(2+) levels; haf-maximal inhibition occurs at 20 uM Zn(2+). Inhibited by strychnine. Strychnine binding locks the channel in a closed conformation and prevents channel opening in response to extracellular glycine. Inhibited by lindane. Inhibited by picrotoxin. Its function is as follows. Subunit of heteromeric glycine-gated chloride channels. Plays an important role in the down-regulation of neuronal excitability. Contributes to the generation of inhibitory postsynaptic currents. Channel activity is potentiated by ethanol. Potentiation of channel activity by intoxicating levels of ethanol contribute to the sedative effects of ethanol. The chain is Glycine receptor subunit alpha-1 (GLRA1) from Homo sapiens (Human).